Consider the following 206-residue polypeptide: LexA repressor (206 aa).

Positions 28–48 (RAEIASELGFKSANAAEEHLK) form a DNA-binding region, H-T-H motif. Residues Ser-122 and Lys-160 each act as for autocatalytic cleavage activity in the active site.

It belongs to the peptidase S24 family. As to quaternary structure, homodimer.

It carries out the reaction Hydrolysis of Ala-|-Gly bond in repressor LexA.. Its function is as follows. Represses a number of genes involved in the response to DNA damage (SOS response), including recA and lexA. In the presence of single-stranded DNA, RecA interacts with LexA causing an autocatalytic cleavage which disrupts the DNA-binding part of LexA, leading to derepression of the SOS regulon and eventually DNA repair. The sequence is that of LexA repressor from Tolumonas auensis (strain DSM 9187 / NBRC 110442 / TA 4).